A 295-amino-acid polypeptide reads, in one-letter code: Nucleotide-binding protein CMS1991 (295 aa).

Residue 19–26 (GMSGAGRS) coordinates ATP. 70–73 (DVRG) contacts GTP.

Belongs to the RapZ-like family.

Its function is as follows. Displays ATPase and GTPase activities. The protein is Nucleotide-binding protein CMS1991 of Clavibacter sepedonicus (Clavibacter michiganensis subsp. sepedonicus).